A 601-amino-acid polypeptide reads, in one-letter code: Serine/threonine-protein phosphatase 2A 65 kDa regulatory subunit A beta isoform (601 aa).

Residue A2 is modified to N-acetylalanine. HEAT repeat units follow at residues 20-58 (DSLY…GVER), 59-96 (TRTE…GGPD), 97-135 (FAHC…TPVA), 136-173 (LEAH…ASNA), 174-212 (VKAE…ELDS), 213-251 (VKTE…SQED), 252-290 (LEAL…GPKI), 291-333 (ALSD…RETV), 334-372 (IMNQ…GKEN), 373-411 (TIEH…GIRQ), 412-450 (LSQS…GVEF), 451-489 (FDEK…GTEW), 490-528 (AQNT…GKEI), 529-567 (TTKQ…DTNA), and 568-601 (LQGE…LALA).

This sequence belongs to the phosphatase 2A regulatory subunit A family. As to quaternary structure, PP2A consists of a common heterodimeric core enzyme, composed of a 36 kDa catalytic subunit (subunit C) and a 65 kDa constant regulatory subunit (PR65 or subunit A), that associates with a variety of regulatory subunits. Proteins that associate with the core dimer include three families of regulatory subunits B (the R2/B/PR55/B55, R3/B''/PR72/PR130/PR59 and R5/B'/B56 families), the 48 kDa variable regulatory subunit, viral proteins, and cell signaling molecules. Interacts with IPO9. Interacts with SGO1. Interacts with RAF1.

Its function is as follows. The PR65 subunit of protein phosphatase 2A serves as a scaffolding molecule to coordinate the assembly of the catalytic subunit and a variable regulatory B subunit. This chain is Serine/threonine-protein phosphatase 2A 65 kDa regulatory subunit A beta isoform (Ppp2r1b), found in Mus musculus (Mouse).